The sequence spans 92 residues: Small ribosomal subunit protein uS19c (92 aa).

Belongs to the universal ribosomal protein uS19 family. As to quaternary structure, component of the chloroplast small ribosomal subunit (SSU). Mature 70S chloroplast ribosomes of higher plants consist of a small (30S) and a large (50S) subunit. The 30S small subunit contains 1 molecule of ribosomal RNA (16S rRNA) and 24 different proteins. The 50S large subunit contains 3 rRNA molecules (23S, 5S and 4.5S rRNA) and 33 different proteins. uS19c binds directly to 16S ribosomal RNA.

It is found in the plastid. The protein resides in the chloroplast. In terms of biological role, component of the chloroplast ribosome (chloro-ribosome), a dedicated translation machinery responsible for the synthesis of chloroplast genome-encoded proteins, including proteins of the transcription and translation machinery and components of the photosynthetic apparatus. This chain is Small ribosomal subunit protein uS19c (rps19), found in Spinacia oleracea (Spinach).